The primary structure comprises 87 residues: UPF0235 protein TGRD_618 (87 aa).

The protein belongs to the UPF0235 family.

The polypeptide is UPF0235 protein TGRD_618 (Endomicrobium trichonymphae).